Reading from the N-terminus, the 509-residue chain is Photosystem II CP47 reaction center protein (509 aa).

6 helical membrane-spanning segments follow: residues alanine 21–serine 36, isoleucine 101–tryptophan 115, glycine 140–phenylalanine 156, isoleucine 203–serine 218, valine 237–valine 252, and serine 457–arginine 472.

Belongs to the PsbB/PsbC family. PsbB subfamily. As to quaternary structure, PSII is composed of 1 copy each of membrane proteins PsbA, PsbB, PsbC, PsbD, PsbE, PsbF, PsbH, PsbI, PsbJ, PsbK, PsbL, PsbM, PsbT, PsbX, PsbY, PsbZ, Psb30/Ycf12, at least 3 peripheral proteins of the oxygen-evolving complex and a large number of cofactors. It forms dimeric complexes. The cofactor is Binds multiple chlorophylls. PSII binds additional chlorophylls, carotenoids and specific lipids..

It is found in the plastid. It localises to the cyanelle thylakoid membrane. One of the components of the core complex of photosystem II (PSII). It binds chlorophyll and helps catalyze the primary light-induced photochemical processes of PSII. PSII is a light-driven water:plastoquinone oxidoreductase, using light energy to abstract electrons from H(2)O, generating O(2) and a proton gradient subsequently used for ATP formation. This chain is Photosystem II CP47 reaction center protein, found in Cyanophora paradoxa.